The primary structure comprises 949 residues: Translation initiation factor IF-2 (949 aa).

3 disordered regions span residues 54-183, 217-288, and 305-357; these read FLKP…EAAP, LPAA…EVAL, and EVVA…EMQA. 2 stretches are compositionally biased toward basic and acidic residues: residues 67–92 and 101–164; these read DQEKPEEIEEKKEAPKSPKRGEERHI and IEAK…EEAA. 2 stretches are compositionally biased toward low complexity: residues 165-183 and 217-228; these read RAAAAAPAAPVAAPAEAAP and LPAAAPAAPSAP. Composition is skewed to basic and acidic residues over residues 235 to 288 and 330 to 339; these read PVEE…EVAL and KYQDNEDRLQ. Residues 445-619 form the tr-type G domain; that stretch reads TRPPVITVMG…EMLNLQSNPT (175 aa). The interval 454 to 461 is G1; the sequence is GHVDHGKT. Residue 454–461 coordinates GTP; sequence GHVDHGKT. A G2 region spans residues 479–483; sequence GITQH. Residues 501-504 are G3; sequence DTPG. Residues 501 to 505 and 555 to 558 each bind GTP; these read DTPGH and NKID. A G4 region spans residues 555–558; that stretch reads NKID. The interval 591 to 593 is G5; sequence SAK.

Belongs to the TRAFAC class translation factor GTPase superfamily. Classic translation factor GTPase family. IF-2 subfamily.

It is found in the cytoplasm. One of the essential components for the initiation of protein synthesis. Protects formylmethionyl-tRNA from spontaneous hydrolysis and promotes its binding to the 30S ribosomal subunits. Also involved in the hydrolysis of GTP during the formation of the 70S ribosomal complex. The protein is Translation initiation factor IF-2 of Magnetococcus marinus (strain ATCC BAA-1437 / JCM 17883 / MC-1).